Reading from the N-terminus, the 147-residue chain is Deoxyuridine 5'-triphosphate nucleotidohydrolase (147 aa).

Residues 67 to 69 (RSG), N80, and 84 to 86 (TID) contribute to the substrate site.

Belongs to the dUTPase family. Requires Mg(2+) as cofactor.

It catalyses the reaction dUTP + H2O = dUMP + diphosphate + H(+). The protein operates within pyrimidine metabolism; dUMP biosynthesis; dUMP from dCTP (dUTP route): step 2/2. In terms of biological role, this enzyme is involved in nucleotide metabolism: it produces dUMP, the immediate precursor of thymidine nucleotides and it decreases the intracellular concentration of dUTP so that uracil cannot be incorporated into DNA. The protein is Deoxyuridine 5'-triphosphate nucleotidohydrolase of Syntrophotalea carbinolica (strain DSM 2380 / NBRC 103641 / GraBd1) (Pelobacter carbinolicus).